The sequence spans 740 residues: Melanoma-associated antigen D4 (740 aa).

Basic and acidic residues predominate over residues 1 to 11; sequence MAEGSYRKESE. Disordered regions lie at residues 1–27, 139–208, 242–298, and 321–377; these read MAEG…EVGE, ATHQ…GPST, PAGV…ALAK, and IPEP…ASQP. Positions 14-27 are enriched in acidic residues; that stretch reads NVEDMDEGSDEVGE. Polar residues-rich tracts occupy residues 141-155 and 162-175; these read HQAS…TSAA and PETS…SRML. Over residues 185 to 207 the composition is skewed to low complexity; the sequence is APARSPQPQTSSQAQEAAAEGPS. Over residues 321-337 the composition is skewed to low complexity; that stretch reads IPEPESAAATSQQSAEP. Acidic residues predominate over residues 354-363; that stretch reads DEYESGEEER. Residues 414–612 enclose the MAGE domain; the sequence is LQERANKLVK…REWRAHFLEA (199 aa). The disordered stretch occupies residues 697–722; sequence WRAGVSSGTNGAASASMLDGPSTSST.

In terms of assembly, interacts with TRIM27.

In terms of biological role, may enhance ubiquitin ligase activity of RING-type zinc finger-containing E3 ubiquitin-protein ligases. Proposed to act through recruitment and/or stabilization of the Ubl-conjugating enzyme (E2) at the E3:substrate complex. The protein is Melanoma-associated antigen D4 (MAGED4) of Bos taurus (Bovine).